The primary structure comprises 1045 residues: Desmoglein-1 (1045 aa).

A signal peptide spans 1–23 (MNWPFFRTAAVLFIFLVVLEVNS). A propeptide spanning residues 24–49 (EFRIQVRDYNTKNGTIKWHSIRRQKR) is cleaved from the precursor. N36, N110, and N180 each carry an N-linked (GlcNAc...) asparagine glycan. Cadherin domains are found at residues 50 to 158 (EWIK…PVFS), 159 to 270 (MSTF…PYME), 271 to 385 (LPSN…GSVF), and 386 to 496 (RPGS…TDGA). Topologically, residues 50–546 (EWIKFAAACR…HPLDNVHFGP (497 aa)) are extracellular. A helical transmembrane segment spans residues 547-567 (AGIGLLIMGFLVLGLVPFLLM). Residues 568–1045 (YCDCGGAPGG…TKYSTVQYTK (478 aa)) are Cytoplasmic-facing. 5 Desmoglein repeat repeats span residues 814–840 (TYPS…TMTE), 841–870 (SYTT…ERVV), 871–900 (GPIS…ERVI), 901–928 (APNS…ERVI), and 929–957 (RPTS…ERVV). The segment at 1019–1045 (FSNTLGSASPTTTRSRITKYSTVQYTK) is disordered. Positions 1020–1045 (SNTLGSASPTTTRSRITKYSTVQYTK) are enriched in polar residues.

As to quaternary structure, binds to JUP/plakoglobin. Interacts with PKP2. Interacts with DSC3; there is evidence to suggest that the interaction promotes cell-cell adhesion of keratinocytes.

The protein resides in the cell membrane. Its subcellular location is the cell junction. The protein localises to the desmosome. It localises to the cytoplasm. It is found in the nucleus. In terms of biological role, component of intercellular desmosome junctions. Involved in the interaction of plaque proteins and intermediate filaments mediating cell-cell adhesion. The polypeptide is Desmoglein-1 (DSG1) (Sus scrofa (Pig)).